We begin with the raw amino-acid sequence, 334 residues long: Protein-methionine-sulfoxide reductase catalytic subunit MsrP (334 aa).

Positions 1-44 (MKKNQFLKESDVTAESVFFMKRRQVLKALGISAAALSLPHAAHA) form a signal peptide, tat-type signal. Residues Asn-88, 91–92 (YE), Cys-146, Thr-181, Asn-233, Arg-238, and 249–251 (GIK) each bind Mo-molybdopterin.

Belongs to the MsrP family. In terms of assembly, heterodimer of a catalytic subunit (MsrP) and a heme-binding subunit (MsrQ). Mo-molybdopterin is required as a cofactor. Post-translationally, predicted to be exported by the Tat system. The position of the signal peptide cleavage has not been experimentally proven.

It localises to the periplasm. The enzyme catalyses L-methionyl-[protein] + a quinone + H2O = L-methionyl-(S)-S-oxide-[protein] + a quinol. It catalyses the reaction L-methionyl-[protein] + a quinone + H2O = L-methionyl-(R)-S-oxide-[protein] + a quinol. In terms of biological role, part of the MsrPQ system that repairs oxidized periplasmic proteins containing methionine sulfoxide residues (Met-O), using respiratory chain electrons. Thus protects these proteins from oxidative-stress damage caused by reactive species of oxygen and chlorine generated by the host defense mechanisms. MsrPQ is essential for the maintenance of envelope integrity under bleach stress, rescuing a wide series of structurally unrelated periplasmic proteins from methionine oxidation, including the primary periplasmic chaperone SurA and the lipoprotein Pal. The catalytic subunit MsrP is non-stereospecific, being able to reduce both (R-) and (S-) diastereoisomers of methionine sulfoxide. The polypeptide is Protein-methionine-sulfoxide reductase catalytic subunit MsrP (Shigella boydii serotype 18 (strain CDC 3083-94 / BS512)).